We begin with the raw amino-acid sequence, 492 residues long: MNREEFLRLAADGYNRIPLSFETLADFDTPLSIYLKLADAPNSYLLESVQGGEKWGRYSIIGLPCRTVLRVYDHQVRISIDGVETERFDCADPLAFVEEFKARYQVPTVPGLPRFDGGLVGYFGYDCVRYVEKRLATCPNPDPLGNPDILLMVSDAVVVFDNLAGKIHAIVLADPSEENAYERGQARLEELLERLRQPITPRRGLDLEAAQGREPAFRASFTREDYENAVGRIKDYILAGDCMQVVPSQRMSIEFKAAPIDLYRALRCFNPTPYMYFFNFGDFHVVGSSPEVLVRVEDGLVTVRPIAGTRPRGINEEADLALEQDLLSDAKEIAEHLMLIDLGRNDVGRVSDIGAVKVTEKMVIERYSNVMHIVSNVTGQLREGLSAMDALRAILPAGTLSGAPKIRAMEIIDELEPVKRGVYGGAVGYLAWNGNMDTAIAIRTAVIKNGELHVQAGGGIVADSVPALEWEETINKRRAMFRAVALAEQSVE.

L-tryptophan is bound by residues Ser48 and 273-275 (PYM). Residue 308–309 (GT) participates in chorismate binding. Glu335 is a binding site for Mg(2+). Chorismate-binding positions include Tyr423, Arg443, 457–459 (GGG), and Gly459. Mg(2+) is bound at residue Glu472.

This sequence belongs to the anthranilate synthase component I family. In terms of assembly, heterotetramer consisting of two non-identical subunits: a beta subunit (TrpG) and a large alpha subunit (TrpE). Requires Mg(2+) as cofactor.

It carries out the reaction chorismate + L-glutamine = anthranilate + pyruvate + L-glutamate + H(+). It functions in the pathway amino-acid biosynthesis; L-tryptophan biosynthesis; L-tryptophan from chorismate: step 1/5. With respect to regulation, feedback inhibited by tryptophan. In terms of biological role, part of a heterotetrameric complex that catalyzes the two-step biosynthesis of anthranilate, an intermediate in the biosynthesis of L-tryptophan. In the first step, the glutamine-binding beta subunit (TrpG) of anthranilate synthase (AS) provides the glutamine amidotransferase activity which generates ammonia as a substrate that, along with chorismate, is used in the second step, catalyzed by the large alpha subunit of AS (TrpE) to produce anthranilate. In the absence of TrpG, TrpE can synthesize anthranilate directly from chorismate and high concentrations of ammonia. The polypeptide is Anthranilate synthase component 1 (Pseudomonas aeruginosa (strain ATCC 15692 / DSM 22644 / CIP 104116 / JCM 14847 / LMG 12228 / 1C / PRS 101 / PAO1)).